The primary structure comprises 335 residues: Phosphate acyltransferase (335 aa).

The protein belongs to the PlsX family. As to quaternary structure, homodimer. Probably interacts with PlsY.

It localises to the cytoplasm. It carries out the reaction a fatty acyl-[ACP] + phosphate = an acyl phosphate + holo-[ACP]. The protein operates within lipid metabolism; phospholipid metabolism. In terms of biological role, catalyzes the reversible formation of acyl-phosphate (acyl-PO(4)) from acyl-[acyl-carrier-protein] (acyl-ACP). This enzyme utilizes acyl-ACP as fatty acyl donor, but not acyl-CoA. The protein is Phosphate acyltransferase of Streptococcus pyogenes serotype M28 (strain MGAS6180).